A 106-amino-acid polypeptide reads, in one-letter code: Protein yippee-like At4g27745 (106 aa).

The Yippee domain occupies 8 to 105 (RLYSCCNCRN…FEKAKIVKED (98 aa)). Positions 12, 15, 68, and 71 each coordinate Zn(2+).

The protein belongs to the yippee family.

This is Protein yippee-like At4g27745 from Arabidopsis thaliana (Mouse-ear cress).